The chain runs to 630 residues: Transposase B from transposon Tn554 (630 aa).

Residues 216 to 302 (TYFKQLVKRY…ILEGLFSTLL (87 aa)) enclose the Core-binding (CB) domain. In terms of domain architecture, Tyr recombinase spans 326–513 (AKPRFIDEFV…FDETLKNEFT (188 aa)). Catalysis depends on residues arginine 363, lysine 391, histidine 465, arginine 468, and histidine 491. Catalysis depends on tyrosine 500, which acts as the O-(3'-phospho-DNA)-tyrosine intermediate.

This sequence belongs to the 'phage' integrase family.

In terms of biological role, one of three proteins encoded by transposon Tn554 required for its transposition. The chain is Transposase B from transposon Tn554 (tnpB1) from Staphylococcus aureus (strain Mu50 / ATCC 700699).